A 282-amino-acid chain; its full sequence is Aldo-keto reductase MT3049 (282 aa).

The Proton donor role is filled by Tyr-57. Positions 197, 235, 237, 238, 239, 243, 246, 247, and 273 each coordinate NADPH.

This sequence belongs to the aldo/keto reductase family.

The protein is Aldo-keto reductase MT3049 of Mycobacterium tuberculosis (strain CDC 1551 / Oshkosh).